The chain runs to 198 residues: Elongation factor Ts (198 aa).

The involved in Mg(2+) ion dislocation from EF-Tu stretch occupies residues 81–84 (TDFV).

The protein belongs to the EF-Ts family.

The protein resides in the cytoplasm. Its function is as follows. Associates with the EF-Tu.GDP complex and induces the exchange of GDP to GTP. It remains bound to the aminoacyl-tRNA.EF-Tu.GTP complex up to the GTP hydrolysis stage on the ribosome. This chain is Elongation factor Ts, found in Dictyoglomus turgidum (strain DSM 6724 / Z-1310).